Consider the following 379-residue polypeptide: Anhydro-N-acetylmuramic acid kinase (379 aa).

An ATP-binding site is contributed by 9–16 (GTSADGVD).

Belongs to the anhydro-N-acetylmuramic acid kinase family.

The catalysed reaction is 1,6-anhydro-N-acetyl-beta-muramate + ATP + H2O = N-acetyl-D-muramate 6-phosphate + ADP + H(+). The protein operates within amino-sugar metabolism; 1,6-anhydro-N-acetylmuramate degradation. Its pathway is cell wall biogenesis; peptidoglycan recycling. Catalyzes the specific phosphorylation of 1,6-anhydro-N-acetylmuramic acid (anhMurNAc) with the simultaneous cleavage of the 1,6-anhydro ring, generating MurNAc-6-P. Is required for the utilization of anhMurNAc either imported from the medium or derived from its own cell wall murein, and thus plays a role in cell wall recycling. The polypeptide is Anhydro-N-acetylmuramic acid kinase (Prochlorococcus marinus (strain MIT 9303)).